We begin with the raw amino-acid sequence, 309 residues long: Ferrochelatase (309 aa).

Residues His-185 and Glu-262 each contribute to the Fe cation site.

It belongs to the ferrochelatase family.

The protein localises to the cytoplasm. The catalysed reaction is heme b + 2 H(+) = protoporphyrin IX + Fe(2+). It participates in porphyrin-containing compound metabolism; protoheme biosynthesis; protoheme from protoporphyrin-IX: step 1/1. Catalyzes the ferrous insertion into protoporphyrin IX. The polypeptide is Ferrochelatase (Campylobacter jejuni subsp. jejuni serotype O:23/36 (strain 81-176)).